The following is a 1000-amino-acid chain: Kinesin-like protein CIN8 (1000 aa).

Residues Met-1–Gly-26 show a composition bias toward polar residues. The disordered stretch occupies residues Met-1–His-28. A Kinesin motor domain is found at Asn-36–Ile-477. Gly-128–Thr-135 contacts ATP. Positions Ala-220 to Ser-242 are enriched in low complexity. Disordered stretches follow at residues Ala-220 to Pro-248 and Lys-260 to Gln-312. Positions Ser-261–Val-276 are enriched in polar residues. The span at Asn-277–Asn-301 shows a compositional bias: low complexity. Positions Gly-302–Gln-312 are enriched in polar residues. Coiled coils occupy residues Met-518–His-615 and Ile-860–Ser-904. The tract at residues Val-970–Glu-1000 is disordered. Ser-972 carries the post-translational modification Phosphoserine. A compositionally biased stretch (basic and acidic residues) spans His-976–Glu-1000.

This sequence belongs to the TRAFAC class myosin-kinesin ATPase superfamily. Kinesin family. BimC subfamily.

Its subcellular location is the cytoplasm. The protein localises to the cytoskeleton. It is found in the spindle. It localises to the mitochondrion. Its function is as follows. Elongates the mitotic spindle by interacting with spindle microtubules to generate an outward force pushing spindle poles apart. Following spindle assembly, CIN8 and KIP1 apparently act to oppose a force, possibly generated by KAR3, that draws separated poles back together. This Saccharomyces cerevisiae (strain ATCC 204508 / S288c) (Baker's yeast) protein is Kinesin-like protein CIN8 (CIN8).